A 223-amino-acid polypeptide reads, in one-letter code: Ribonuclease 3 (223 aa).

Residues L3–G125 form the RNase III domain. A Mg(2+)-binding site is contributed by E38. Residue D42 is part of the active site. Mg(2+) contacts are provided by D111 and E114. E114 is an active-site residue. Residues D152–T222 enclose the DRBM domain.

The protein belongs to the ribonuclease III family. In terms of assembly, homodimer. The cofactor is Mg(2+).

It localises to the cytoplasm. The catalysed reaction is Endonucleolytic cleavage to 5'-phosphomonoester.. Its function is as follows. Digests double-stranded RNA. Involved in the processing of primary rRNA transcript to yield the immediate precursors to the large and small rRNAs (23S and 16S). Processes some mRNAs, and tRNAs when they are encoded in the rRNA operon. Processes pre-crRNA and tracrRNA of type II CRISPR loci if present in the organism. The sequence is that of Ribonuclease 3 from Actinobacillus pleuropneumoniae serotype 3 (strain JL03).